The primary structure comprises 353 residues: Very-long-chain 3-oxoacyl-CoA reductase (353 aa).

Residues 33–53 (AAWALIAAGGFFVISRALLFG) form a helical membrane-spanning segment. Residues valine 78, aspartate 133, aspartate 141, asparagine 160, tyrosine 227, lysine 231, isoleucine 260, and serine 262 each coordinate NADP(+). Catalysis depends on tyrosine 227, which acts as the Proton donor. Lysine 231 serves as the catalytic Lowers pKa of active site Tyr.

The protein belongs to the short-chain dehydrogenases/reductases (SDR) family.

It localises to the endoplasmic reticulum membrane. It carries out the reaction a very-long-chain (3R)-3-hydroxyacyl-CoA + NADP(+) = a very-long-chain 3-oxoacyl-CoA + NADPH + H(+). It functions in the pathway lipid metabolism; fatty acid biosynthesis. Functionally, component of the microsomal membrane bound fatty acid elongation system, which produces the 26-carbon very long-chain fatty acids (VLCFA) from palmitate. Catalyzes the reduction of the 3-ketoacyl-CoA intermediate that is formed in each cycle of fatty acid elongation. VLCFAs serve as precursors for ceramide and sphingolipids. In Aspergillus terreus (strain NIH 2624 / FGSC A1156), this protein is Very-long-chain 3-oxoacyl-CoA reductase.